A 280-amino-acid chain; its full sequence is 4-deoxy-L-threo-5-hexosulose-uronate ketol-isomerase (280 aa).

H198, H200, E205, and H247 together coordinate Zn(2+).

Belongs to the KduI family. The cofactor is Zn(2+).

The enzyme catalyses 5-dehydro-4-deoxy-D-glucuronate = 3-deoxy-D-glycero-2,5-hexodiulosonate. It participates in glycan metabolism; pectin degradation; 2-dehydro-3-deoxy-D-gluconate from pectin: step 4/5. Catalyzes the isomerization of 5-dehydro-4-deoxy-D-glucuronate to 3-deoxy-D-glycero-2,5-hexodiulosonate. In Bacteroides fragilis (strain ATCC 25285 / DSM 2151 / CCUG 4856 / JCM 11019 / LMG 10263 / NCTC 9343 / Onslow / VPI 2553 / EN-2), this protein is 4-deoxy-L-threo-5-hexosulose-uronate ketol-isomerase.